The chain runs to 239 residues: Uridylate kinase (239 aa).

Residue 13-16 participates in ATP binding; it reads KVSG. Glycine 55 serves as a coordination point for UMP. ATP contacts are provided by glycine 56 and arginine 60. UMP contacts are provided by residues aspartate 75 and 136 to 143; that span reads TGNPFFTT. Threonine 163, glutamine 164, tyrosine 169, and aspartate 172 together coordinate ATP.

Belongs to the UMP kinase family. As to quaternary structure, homohexamer.

It localises to the cytoplasm. It carries out the reaction UMP + ATP = UDP + ADP. The protein operates within pyrimidine metabolism; CTP biosynthesis via de novo pathway; UDP from UMP (UMPK route): step 1/1. Inhibited by UTP. Catalyzes the reversible phosphorylation of UMP to UDP. The protein is Uridylate kinase of Bartonella quintana (strain Toulouse) (Rochalimaea quintana).